Reading from the N-terminus, the 284-residue chain is TM2 domain-containing protein almondex (284 aa).

The N-terminal stretch at 1 to 32 (MRLQRQCIVVNMRSAIVLIMIFVLTGIRNSET) is a signal peptide. The disordered stretch occupies residues 33 to 63 (ASGGNQMDLSDSKGDHKDNSNASNGNGNAND). Topologically, residues 33 to 225 (ASGGNQMDLS…NWTQGYRWST (193 aa)) are extracellular. The segment covering 42-51 (SDSKGDHKDN) has biased composition (basic and acidic residues). Positions 52 to 63 (SNASNGNGNAND) are enriched in low complexity. N-linked (GlcNAc...) asparagine glycans are attached at residues asparagine 53, asparagine 89, asparagine 141, asparagine 194, asparagine 206, and asparagine 216. The 48-residue stretch at 220–267 (GYRWSTALLISLTLGGFGADRFYLGHWQEGIGKLFSFGGLGVWTIIDV) folds into the TM2 domain. The chain crosses the membrane as a helical span at residues 226-246 (ALLISLTLGGFGADRFYLGHW). The Cytoplasmic segment spans residues 247–249 (QEG). Residues 250–270 (IGKLFSFGGLGVWTIIDVLLI) form a helical membrane-spanning segment. The Extracellular segment spans residues 271–284 (SMHYLGPADGSLYI).

It belongs to the TM2 family. Expressed in female ovary, mainly in nurse cells (at protein level). Expressed in the brain at low levels (at protein level).

The protein resides in the membrane. The protein localises to the vesicle. Functionally, positive regulator of Notch signaling during lateral inhibition and boundary formation. Interacts with Notch signaling at the membrane, at the level of gamma-secretase-mediated S3 cleavage. May regulate Notch signaling by regulating the subcellular localization of N/Notch in a context dependent manner. Maternal neurogenic factor involved in Notch signaling-dependent mesectodermal and neuroectodermal specification during early embryogenesis. Functions cooperatively with bisc/TM2D1 and amrt/TM2D2. Required for maintenance of neuronal function. Involved in imaginal specification of eyes and wings. The polypeptide is TM2 domain-containing protein almondex (Drosophila melanogaster (Fruit fly)).